We begin with the raw amino-acid sequence, 141 residues long: MKLTINILFCLILISQYNSANGNLRDLFNNVRGSISSSANKIRQDVKTLFHPSDKSGNKESSNIVFVEDKDEGAVGPARDNKPVAVTPAPVVSTTTQASAPTVATNGTATGGKDDKGRENFNGGCLAGYMRTADGRCKPTF.

An N-terminal signal peptide occupies residues 1–22 (MKLTINILFCLILISQYNSANG). Residues 23 to 118 (NLRDLFNNVR…ATGGKDDKGR (96 aa)) constitute a propeptide that is removed on maturation. Over residues 46–58 (VKTLFHPSDKSGN) the composition is skewed to basic and acidic residues. Positions 46–118 (VKTLFHPSDK…ATGGKDDKGR (73 aa)) are disordered. Residues 83–98 (PVAVTPAPVVSTTTQA) show a composition bias toward low complexity. The span at 99-108 (SAPTVATNGT) shows a compositional bias: polar residues. Cys-125 and Cys-137 are disulfide-bonded.

It belongs to the GBP/PSP1/paralytic peptide family.

In terms of biological role, mediates the spreading of plasmatocytes to foreign surfaces. Plasmocytes are a class of hemocytes involved in insect cellular immunity. This Chrysodeixis includens (Soybean looper) protein is Plasmatocyte-spreading peptide (PSP1).